Here is a 296-residue protein sequence, read N- to C-terminus: POM121-like protein 12 (296 aa).

Disordered stretches follow at residues 1–54 (MGAA…SPWP) and 142–162 (APPERQESPWRSPGQRARPAG). Low complexity predominate over residues 34-52 (SRSPSTPQTTPSPQGRQSP).

The protein belongs to the POM121 family.

This chain is POM121-like protein 12 (POM121L12), found in Homo sapiens (Human).